We begin with the raw amino-acid sequence, 49 residues long: Isoflavone reductase homolog 2 (49 aa).

Residue 5-11 (GGTGYIG) participates in NADP(+) binding.

Belongs to the NmrA-type oxidoreductase family. Isoflavone reductase subfamily.

The protein localises to the cytoplasm. This is Isoflavone reductase homolog 2 from Pseudotsuga menziesii (Douglas-fir).